A 397-amino-acid polypeptide reads, in one-letter code: MKLFFFLYTFGLVQTIFGVEIKQGFKWNKILYEGDTSENFNPDNNILTAFAYDPESQKLFLTVPRKYPETMYTLAEVDTEKNSFESGDTSPLLGKFSGHETGKELTSVYQPVIDECHRLWVVDVGSVERNSDGTEGQPEHNPTLVAYDLKEANYPEVIRYTFPDNSIEKPTFLGGFAVDVVKPDECSETFVYITNFLTNALIVYDHKNKDSWTVQDSTFGPDKKSKFDHDGQQYEYEAGIFGITLGERDNEGNRQAYYLVASSTKLHSINTKELKQKGSKVNANYLGDRGESTDAIGLVYDPKTKTIFFVESNSKRVSCWNTQETLNKDKIDVIYHNADFSFGTDISIDSQDNLWFLANGLPPLENSDKFVFTKPRYQIFKVNIQEAIAGTKCEKNL.

A signal peptide spans 1–18; the sequence is MKLFFFLYTFGLVQTIFG.

It belongs to the major royal jelly protein family. Salivary gland (at protein level).

It is found in the secreted. Functionally, probably modulates blood feeding of sand flies on vertebrate species by binding and sequestering different mediators involved in the host response. Binds biogenic amines. Binds adrenaline and noradrenaline with high affinity. Binds serotonin. Binds dopamine and octopamine. Exhibits anti-inflammatory effects in the host: reduces IL17A, TNF-alpha (TNF) and IFN-gamma (IFNG) production by host lymph node cells, suppresses expression of MHC-II and CD86, reduces TNF-alpha production and increases IL10 production, in host bone marrow-derived dendritic cells (BMDCs) stimulated by lipopolysaccharides. Reduces pain in mouse mechanical hypernociception model. This Lutzomyia longipalpis (Sand fly) protein is Yellow-related salivary protein LJM111.